The following is a 222-amino-acid chain: PKHD-type hydroxylase P9301_13621 (222 aa).

One can recognise a Fe2OG dioxygenase domain in the interval 81 to 175 (KIHGIMFTKS…RLVCVGWIES (95 aa)). Fe cation contacts are provided by His99, Asp101, and His156. Arg166 is a 2-oxoglutarate binding site.

The cofactor is Fe(2+). L-ascorbate serves as cofactor.

The protein is PKHD-type hydroxylase P9301_13621 of Prochlorococcus marinus (strain MIT 9301).